The following is a 291-amino-acid chain: Zinc transporter ZupT (291 aa).

8 helical membrane-spanning segments follow: residues 8 to 28 (IFIAMLLTLFAGFSTAIGSII), 39 to 59 (VLSLGLGFSAGVMIYISFMEI), 74 to 94 (HWAELLGLACFFGGILISLLI), 147 to 167 (GIFTALAIAIHNFPEGFATFI), 174 to 194 (TLGIAIAIAVAIHNIPEGLAV), 209 to 229 (FIYSALSGFAEPLGAFVGALI), 233 to 253 (FIGDLTLAISFAVIAGIMVFI), and 271 to 291 (SLYGLIAGMAIMALSLNLLGQ). Residues Asn-158 and Glu-161 each contribute to the Fe(2+) site. The Zn(2+) site is built by Glu-161 and His-186. 3 residues coordinate Fe(2+): Asn-187, Glu-190, and Glu-219. Glu-190 contacts Zn(2+).

It belongs to the ZIP transporter (TC 2.A.5) family. ZupT subfamily.

Its subcellular location is the cell inner membrane. It carries out the reaction Zn(2+)(in) = Zn(2+)(out). Functionally, mediates zinc uptake. May also transport other divalent cations. This is Zinc transporter ZupT from Campylobacter jejuni subsp. jejuni serotype O:2 (strain ATCC 700819 / NCTC 11168).